Consider the following 212-residue polypeptide: Cytidylate kinase (212 aa).

Residue 11–19 coordinates ATP; sequence GPAASGKGT. The disordered stretch occupies residues 50–69; that stretch reads GGDPADPAASEEQARSLSRL.

This sequence belongs to the cytidylate kinase family. Type 1 subfamily.

It localises to the cytoplasm. The catalysed reaction is CMP + ATP = CDP + ADP. It catalyses the reaction dCMP + ATP = dCDP + ADP. The chain is Cytidylate kinase from Acidiphilium cryptum (strain JF-5).